The following is a 657-amino-acid chain: Hemocyanin B chain (657 aa).

A disulfide bridge links Cys-93 with Cys-98. Asn-167 is a glycosylation site (N-linked (GlcNAc...) asparagine). Cu cation-binding residues include His-194, His-198, His-224, His-344, His-348, and His-384. 2 disulfides stabilise this stretch: Cys-483–Cys-502 and Cys-562–Cys-609.

Belongs to the tyrosinase family. Hemocyanin subfamily. Hexamer of a number of different chains, of which A, B, and C have been identified. Hemolymph.

The protein localises to the secreted. It localises to the extracellular space. Hemocyanins are copper-containing oxygen carriers occurring freely dissolved in the hemolymph of many mollusks and arthropods. This Panulirus interruptus (California spiny lobster) protein is Hemocyanin B chain.